We begin with the raw amino-acid sequence, 75 residues long: UPF0235 protein Ava_3894 (75 aa).

The tract at residues 1-32 (MQKKVKVKPNSKQQKIAEQDDGSLTVHLKSPP) is disordered.

This sequence belongs to the UPF0235 family.

The protein is UPF0235 protein Ava_3894 of Trichormus variabilis (strain ATCC 29413 / PCC 7937) (Anabaena variabilis).